Consider the following 784-residue polypeptide: Ribosome biogenesis protein BOP1 homolog (784 aa).

Residues 1–11 (MTKKLALKRKG) are compositionally biased toward basic residues. A disordered region spans residues 1–159 (MTKKLALKRK…DSDTSDEEDI (159 aa)). 4 stretches are compositionally biased toward acidic residues: residues 27 to 36 (SENEEEEEDL), 45 to 54 (EDSTDDEGID), 62 to 73 (SEELQFESDEEG), and 84 to 111 (AEED…EDEE). The segment covering 112–123 (KDSKSKQADDKP) has biased composition (basic and acidic residues). The segment covering 124-133 (SSSGAASKKA) has biased composition (low complexity). The span at 138–148 (LSKRDTSKPEY) shows a compositional bias: basic and acidic residues. Acidic residues predominate over residues 149-158 (QDSDTSDEED). 7 WD repeats span residues 445 to 486 (GHTD…RTIE), 488 to 526 (DEVV…KVLV), 570 to 612 (THFK…SQIP), 615 to 653 (KSKG…LVKK), 656 to 695 (TNSK…KPYQ), 699 to 738 (LHRN…DLLQ), and 754 to 784 (RDEF…RLYT).

This sequence belongs to the WD repeat BOP1/ERB1 family.

It is found in the nucleus. The protein resides in the nucleolus. The protein localises to the nucleoplasm. Required for maturation of ribosomal RNAs and formation of the large ribosomal subunit. In Drosophila yakuba (Fruit fly), this protein is Ribosome biogenesis protein BOP1 homolog.